The sequence spans 563 residues: Eukaryotic translation initiation factor 3 subunit D (563 aa).

Residues 95 to 136 (PGYMRNRNRFNQRGGYRRDNRGGRFQGQGGNMGMQNLSRGRD) form a disordered region. The segment at 294-308 (EFDLLTVGETANDLN) is RNA gate. Residues 528 to 563 (IPNSTFETDEEDDDDDEDDVENDDGDDEKDEGDGED) are disordered. Over residues 534–563 (ETDEEDDDDDEDDVENDDGDDEKDEGDGED) the composition is skewed to acidic residues.

Belongs to the eIF-3 subunit D family. Component of the eukaryotic translation initiation factor 3 (eIF-3) complex.

The protein localises to the cytoplasm. Functionally, mRNA cap-binding component of the eukaryotic translation initiation factor 3 (eIF-3) complex, which is involved in protein synthesis of a specialized repertoire of mRNAs and, together with other initiation factors, stimulates binding of mRNA and methionyl-tRNAi to the 40S ribosome. The eIF-3 complex specifically targets and initiates translation of a subset of mRNAs involved in cell proliferation. In the eIF-3 complex, eif3d specifically recognizes and binds the 7-methylguanosine cap of a subset of mRNAs. The protein is Eukaryotic translation initiation factor 3 subunit D of Nematostella vectensis (Starlet sea anemone).